We begin with the raw amino-acid sequence, 1792 residues long: MSQRGDRGEGHARRPGRSSSFGGGHRGGGGVGGAGKGGGGSSGQPPLATNRSFRKSGNGHGGHQRAVSQPDTHGFQPAPAPTALQTPPLRPPAPQNAPAHVPVPAPRPQHHDPSGARAPTLPPSSENTANAPPLKGIPHAAPRAPSRISSTSTSQGAPKGGAYNLQFGSFPMNGGTGGSTMQFPARTSSAPPNLDEQKRMQALPEGHKVVPSGLVPQAPKHQQQQQPLQQQKQQPQSQPPLQQTRKDVVSSNHSSKPINPHIPSQVKSSVHVSPSVPNVAPPRPPVQQIPGMPMSMPFHHQAPLQFGGHNPQIPPQGVVPSSLQMSMGLHGANAPQVAQQMYIPTIQHHHQLQPPTMMHQAAGIPYGPAAHQLTQMSGMMNVGVAPQFTPQQPNKYVTGPTRKTTVKITHPDTHEELKLDKRMDSSGQRGLPSVQQQSQPVSTYGSPMGFYQQNSYNQSTMFYPTTSGVGQVPTVSQGPRFVSTQTVSYISPSMNTGPGSNKDNLAGSTTSGHSQVTGKPHPAGLHMEKSGVQTVTISAPPGKSDVNKLKPAEDVVSHRQKDNEAVSGVRKSGENESKASPITEKHPTPVSQPLQALAANPETTAAASFVVNSVPGDDGKSKESIQRTGSFKDSNKNATKDTRNLSQEPQSASSAEDLKVHTSVKDVCCGVSLMESKGVNKESEQTNAASASPTEMLKAADASSIDRSSARSTSESTENVQEVGKSDVAIGDSEKSGITNKVSPDLTKDDISSGSTGNESHEVCTLDLAEQLPVGASNPDNLDTATSVTDQGQLLKEPSSSVSDENVIMDRSHQSAEKMSDLVDDTVASVASSETLPESIIQNANAKGNTSGNQETGSATSSNILNVLPVPHSVASEDPLKPESMLKDQSSSAPAASARPVSREKPSVEITRTKFTAVKKKKRREMLSKADAAGSSDLYNAYKGPEEKVDFIGASESLDSSSIADHELPDESSEKEVNMGEDEGKKKVELDDWEDAAEMSTPKLERSDSSNQTTEANGRKRYSRDFLLTLAQSCTNLPVGFQMIEYASVLFPNLAGKSYVVDHPSPGRGADRPASRGDRRGVVIEDDRWGKSGHLFGSGRDMSMDNGPPTMNHRGAPGVMRNPRGGLINVGPVAPQMSRSGSDADRWQQKGIFPSPVTPMQVMHKAEKKYVVGKVSDEEEAKQRQLKAILNKLTPQNFEKLFEKVKEVNIDNVATLTGVISQIFDKALMEPTFCEMYANFCFHLAGALPDFSEDNEKITFKRLLLNKCQEEFERGEREEAEADKTEEEGEIKQTKEEREEKRIRARRRMLGNIRLIGELYKKRMLTERIMHECIKKLLGNYQNPDEENIEALCKLMSTIGEMIDHAKAKEHMDAYFDIMLKLSTSQQLSSRVRFMLRDSIDLRKNKWQQRRKVEGPKKIDEVHRDAAQERHAQSSRLARGSVVGSGPRRGAAPMDYGPRGSAAALASPSSQQVGHRGMPSHSRGFGTQDIRFEERSPLDHRTTVLPPRKDEAITLGPQGGLARGMSIRGQPLISNAELSSADSRRMVSGPNGYNSASTAREEPGSRIPDRSGRIAPNTQFAGPSNRPASQEGRSGNKLYSEDDLREKSISAIREYYSAKDEKEVALCIEELNAPSFYPSVVSLWVNDSFERKDMERELLTKLFVSLCNSRNNLLSKSHLTAGLATVLGSLEDALSDAPRAAEYLGRLLARFVVESILSLQEVGTLIEKGGEEPGELVHHGIGADVLGAVLESIKVEKGDSFLNEAKASSNLKLEDFRPQHLKRSKLDAFMKA.

A compositionally biased stretch (basic and acidic residues) spans 1 to 12 (MSQRGDRGEGHA). Disordered regions lie at residues 1-285 (MSQR…PRPP), 424-446 (DSSG…TYGS), 491-590 (SPSM…PTPV), 612-659 (NSVP…EDLK), 678-761 (GVNK…NESH), 874-912 (VASE…EITR), 960-993 (SSSI…LDDW), 999-1018 (MSTP…EANG), 1275-1299 (GERE…EERE), 1407-1503 (WQQR…HRTT), and 1537-1600 (ELSS…KLYS). A compositionally biased stretch (gly residues) spans 21–42 (FGGGHRGGGGVGGAGKGGGGSS). Over residues 88–107 (PLRPPAPQNAPAHVPVPAPR) the composition is skewed to pro residues. Polar residues-rich tracts occupy residues 147–156 (RISSTSTSQG) and 179–191 (STMQ…SSAP). Low complexity-rich tracts occupy residues 216 to 243 (PQAP…PLQQ), 263 to 278 (PSQV…SVPN), and 432 to 442 (PSVQQQSQPVS). Residues 491–517 (SPSMNTGPGSNKDNLAGSTTSGHSQVT) are compositionally biased toward polar residues. Composition is skewed to basic and acidic residues over residues 545-564 (DVNK…KDNE), 571-587 (KSGE…EKHP), and 633-643 (DSNKNATKDTR). A compositionally biased stretch (polar residues) spans 644–654 (NLSQEPQSASS). Positions 699–718 (AADASSIDRSSARSTSESTE) are enriched in low complexity. Over residues 964–990 (ADHELPDESSEKEVNMGEDEGKKKVEL) the composition is skewed to basic and acidic residues. Residues 1018–1030 (GRKRYSRDFLLTL) form an EIF4E-binding region. The MIF4G domain maps to 1183 to 1406 (QRQLKAILNK…RDSIDLRKNK (224 aa)). The segment covering 1278 to 1289 (EEAEADKTEEEG) has biased composition (acidic residues). 2 stretches are compositionally biased toward basic and acidic residues: residues 1290-1299 (EIKQTKEERE) and 1411-1432 (RKVE…ERHA). 2 stretches are compositionally biased toward low complexity: residues 1439–1450 (RGSVVGSGPRRG) and 1461–1470 (SAAALASPSS). Basic and acidic residues-rich tracts occupy residues 1490–1503 (IRFE…HRTT) and 1559–1572 (AREE…DRSG). The span at 1576-1593 (PNTQFAGPSNRPASQEGR) shows a compositional bias: polar residues. The 125-residue stretch at 1603 to 1727 (DLREKSISAI…SLQEVGTLIE (125 aa)) folds into the MI domain.

This sequence belongs to the eukaryotic initiation factor 4G family. In terms of assembly, EIF4F is a multi-subunit complex, the composition of which varies with external and internal environmental conditions. It is composed of at least EIF4A, EIF4E and EIF4G. In higher plants two isoforms of EIF4F have been identified, named isoform EIF4F and isoform EIF(iso)4F. Isoform EIF4F has subunits p220 and p26, whereas isoform EIF(iso)4F has subunits p82 and p28.

Its function is as follows. Component of the protein complex eIF4F, which is involved in the recognition of the mRNA cap, ATP-dependent unwinding of 5'-terminal secondary structure and recruitment of mRNA to the ribosome. The sequence is that of Eukaryotic translation initiation factor 4G from Oryza sativa subsp. japonica (Rice).